A 116-amino-acid polypeptide reads, in one-letter code: NADH-ubiquinone oxidoreductase chain 3 (116 aa).

A run of 3 helical transmembrane segments spans residues 3-23 (LITTIITITITLSAVLATISF), 56-76 (FFLIAILFLLFDLEIALLLPL), and 87-107 (LTLIWSTAVLALLTLGLIYEW).

It belongs to the complex I subunit 3 family.

It localises to the mitochondrion membrane. It carries out the reaction a ubiquinone + NADH + 5 H(+)(in) = a ubiquinol + NAD(+) + 4 H(+)(out). Core subunit of the mitochondrial membrane respiratory chain NADH dehydrogenase (Complex I) that is believed to belong to the minimal assembly required for catalysis. Complex I functions in the transfer of electrons from NADH to the respiratory chain. The immediate electron acceptor for the enzyme is believed to be ubiquinone. The sequence is that of NADH-ubiquinone oxidoreductase chain 3 (MT-ND3) from Oncorhynchus keta (Chum salmon).